The sequence spans 274 residues: 3-methyl-2-oxobutanoate hydroxymethyltransferase (274 aa).

Asp-49 and Asp-88 together coordinate Mg(2+). 3-methyl-2-oxobutanoate contacts are provided by residues 49–50 (DS), Asp-88, and Lys-118. Residue Glu-120 participates in Mg(2+) binding. Glu-187 (proton acceptor) is an active-site residue.

This sequence belongs to the PanB family. Homodecamer; pentamer of dimers. Requires Mg(2+) as cofactor.

The protein resides in the cytoplasm. The catalysed reaction is 3-methyl-2-oxobutanoate + (6R)-5,10-methylene-5,6,7,8-tetrahydrofolate + H2O = 2-dehydropantoate + (6S)-5,6,7,8-tetrahydrofolate. It participates in cofactor biosynthesis; (R)-pantothenate biosynthesis; (R)-pantoate from 3-methyl-2-oxobutanoate: step 1/2. Catalyzes the reversible reaction in which hydroxymethyl group from 5,10-methylenetetrahydrofolate is transferred onto alpha-ketoisovalerate to form ketopantoate. This Allorhizobium ampelinum (strain ATCC BAA-846 / DSM 112012 / S4) (Agrobacterium vitis (strain S4)) protein is 3-methyl-2-oxobutanoate hydroxymethyltransferase.